The primary structure comprises 332 residues: Cell growth regulator with RING finger domain protein 1 (332 aa).

The RING-type zinc-finger motif lies at 274-309 (CVVCQNGTVNWVLLPCRHTCLCDGCVKYFQQCPMCR).

In terms of tissue distribution, ubiquitously expressed with high expression in testis and the cerebellum.

It is found in the nucleus. It localises to the endoplasmic reticulum. Its function is as follows. Able to inhibit growth in several cell lines. The protein is Cell growth regulator with RING finger domain protein 1 (CGRRF1) of Homo sapiens (Human).